The chain runs to 208 residues: Small ribosomal subunit protein uS4 (208 aa).

An S4 RNA-binding domain is found at 98-178; it reads SRLDNVVYRM…RPKWLEYDAE (81 aa).

It belongs to the universal ribosomal protein uS4 family. Part of the 30S ribosomal subunit. Contacts protein S5. The interaction surface between S4 and S5 is involved in control of translational fidelity.

Its function is as follows. One of the primary rRNA binding proteins, it binds directly to 16S rRNA where it nucleates assembly of the body of the 30S subunit. In terms of biological role, with S5 and S12 plays an important role in translational accuracy. The protein is Small ribosomal subunit protein uS4 of Acetivibrio thermocellus (strain ATCC 27405 / DSM 1237 / JCM 9322 / NBRC 103400 / NCIMB 10682 / NRRL B-4536 / VPI 7372) (Clostridium thermocellum).